A 75-amino-acid chain; its full sequence is Antimicrobial peptide Meucin-49-1 (75 aa).

Residues 1 to 22 form the signal peptide; sequence MNKKILLVIFIVTMLIVDEVNS.

The protein belongs to the non-disulfide-bridged peptide (NDBP) superfamily. Long chain multifunctional peptide (group 2) family. Expressed by the venom gland.

It localises to the secreted. Its function is as follows. Antimicrobial peptide. The sequence is that of Antimicrobial peptide Meucin-49-1 from Mesobuthus eupeus (Lesser Asian scorpion).